A 274-amino-acid polypeptide reads, in one-letter code: Thiamine kinase (274 aa).

It belongs to the thiamine kinase family.

It catalyses the reaction thiamine + ATP = thiamine phosphate + ADP + H(+). The protein operates within cofactor biosynthesis; thiamine diphosphate biosynthesis; thiamine phosphate from thiamine: step 1/1. Its function is as follows. Catalyzes the ATP-dependent phosphorylation of thiamine to thiamine phosphate. Is involved in thiamine salvage. In Salmonella gallinarum (strain 287/91 / NCTC 13346), this protein is Thiamine kinase.